The following is a 289-amino-acid chain: Phosphatidylglycerol--prolipoprotein diacylglyceryl transferase (289 aa).

4 helical membrane-spanning segments follow: residues 18–38 (FTIYWYGVLIGLGVIIGYVMA), 54–74 (DFVMYVIPVAIIFARLYYVIF), 86–106 (VFYIWEGGLAIHGALIGGVLT), and 116–136 (LSFWQLMDVAAPSILIGQAIG). Arginine 137 serves as a coordination point for a 1,2-diacyl-sn-glycero-3-phospho-(1'-sn-glycerol). 3 consecutive transmembrane segments (helical) span residues 177 to 197 (HPTFLYESIWNFIGVVVLLLL), 205 to 225 (GELFFSYLIWYSIGRFFIEGM), and 236 to 256 (LRTAQIVSILLIVGALLLWWY).

Belongs to the Lgt family.

The protein localises to the cell membrane. It carries out the reaction L-cysteinyl-[prolipoprotein] + a 1,2-diacyl-sn-glycero-3-phospho-(1'-sn-glycerol) = an S-1,2-diacyl-sn-glyceryl-L-cysteinyl-[prolipoprotein] + sn-glycerol 1-phosphate + H(+). It functions in the pathway protein modification; lipoprotein biosynthesis (diacylglyceryl transfer). Functionally, catalyzes the transfer of the diacylglyceryl group from phosphatidylglycerol to the sulfhydryl group of the N-terminal cysteine of a prolipoprotein, the first step in the formation of mature lipoproteins. The sequence is that of Phosphatidylglycerol--prolipoprotein diacylglyceryl transferase from Halalkalibacterium halodurans (strain ATCC BAA-125 / DSM 18197 / FERM 7344 / JCM 9153 / C-125) (Bacillus halodurans).